The chain runs to 195 residues: MAPAASRLRAEAGLGALPRRALAQYLLFLRLYPVLTKAATSGILSALGNFLAQMIEKKRKKENSRSLDVGGPLRYAVYGFFFTGPLSHFFYFFMEHWIPPEVPLAGLRRLLLDRLVFAPAFLMLFFLIMNFLEGKDASAFAAKMRGGFWPALRMNWRVWTPLQFININYVPLKFRVLFANLAALFWYAYLASLGK.

The Cytoplasmic segment spans residues 1–30 (MAPAASRLRAEAGLGALPRRALAQYLLFLR). The helical transmembrane segment at 31–51 (LYPVLTKAATSGILSALGNFL) threads the bilayer. At 52–75 (AQMIEKKRKKENSRSLDVGGPLRY) the chain is on the peroxisomal side. The helical transmembrane segment at 76 to 96 (AVYGFFFTGPLSHFFYFFMEH) threads the bilayer. Residues 97 to 114 (WIPPEVPLAGLRRLLLDR) are Cytoplasmic-facing. A helical transmembrane segment spans residues 115-135 (LVFAPAFLMLFFLIMNFLEGK). Over 136-173 (DASAFAAKMRGGFWPALRMNWRVWTPLQFININYVPLK) the chain is Peroxisomal. The helical transmembrane segment at 174–194 (FRVLFANLAALFWYAYLASLG) threads the bilayer.

It belongs to the peroxisomal membrane protein PXMP2/4 family. In terms of assembly, interacts with PEX19 and SIVA1.

It is found in the peroxisome membrane. In terms of biological role, seems to be involved in pore-forming activity and may contribute to the unspecific permeability of the peroxisomal membrane. This Homo sapiens (Human) protein is Peroxisomal membrane protein 2 (PXMP2).